Here is a 302-residue protein sequence, read N- to C-terminus: Succinate--CoA ligase [ADP-forming] subunit alpha (302 aa).

CoA is bound by residues 17–20, lysine 43, and 96–98; these read TGST and ITE. Tyrosine 159 contacts substrate. Histidine 247 acts as the Tele-phosphohistidine intermediate in catalysis.

The protein belongs to the succinate/malate CoA ligase alpha subunit family. As to quaternary structure, heterotetramer of two alpha and two beta subunits.

It catalyses the reaction succinate + ATP + CoA = succinyl-CoA + ADP + phosphate. The enzyme catalyses GTP + succinate + CoA = succinyl-CoA + GDP + phosphate. It functions in the pathway carbohydrate metabolism; tricarboxylic acid cycle; succinate from succinyl-CoA (ligase route): step 1/1. In terms of biological role, succinyl-CoA synthetase functions in the citric acid cycle (TCA), coupling the hydrolysis of succinyl-CoA to the synthesis of either ATP or GTP and thus represents the only step of substrate-level phosphorylation in the TCA. The alpha subunit of the enzyme binds the substrates coenzyme A and phosphate, while succinate binding and nucleotide specificity is provided by the beta subunit. The protein is Succinate--CoA ligase [ADP-forming] subunit alpha of Staphylococcus epidermidis (strain ATCC 35984 / DSM 28319 / BCRC 17069 / CCUG 31568 / BM 3577 / RP62A).